A 1076-amino-acid chain; its full sequence is Nickel-cobalt-cadmium resistance protein NccA (1076 aa).

The next 12 membrane-spanning stretches (helical) occupy residues 14-34 (WLVL…LNLL), 367-387 (VAKN…ALLG), 391-411 (AAVI…IGMN), 419-439 (LMSL…IIVE), 476-496 (TVYG…FQGV), 503-523 (PMVI…LTFV), 562-582 (MPFL…FTFV), 904-924 (LAII…MAIG), 929-949 (TATV…ALVL), 960-980 (VGFI…ISAI), 1004-1024 (PVLM…IATG), and 1036-1056 (VVIG…PAVC).

Belongs to the resistance-nodulation-cell division (RND) (TC 2.A.6) family.

It localises to the cell membrane. Its function is as follows. Component of the NCC cation-efflux system that confers resistance to nickel, cobalt and cadmium. May form a membrane tunnel, which allows ion transport across the membrane. The sequence is that of Nickel-cobalt-cadmium resistance protein NccA (nccA) from Alcaligenes xylosoxydans xylosoxydans (Achromobacter xylosoxidans).